The chain runs to 130 residues: Small ribosomal subunit protein uS9 (130 aa).

It belongs to the universal ribosomal protein uS9 family.

The polypeptide is Small ribosomal subunit protein uS9 (Exiguobacterium sp. (strain ATCC BAA-1283 / AT1b)).